Here is a 417-residue protein sequence, read N- to C-terminus: MFSRDLTIAKYDADLFAAMEQEALRQEEHIELIASENYTSPAVMEAQGSALTNKYAEGYPGKRYYGGCEYVDIIEQLAIDRAKELFGADYANVQPHAGSQANSAVYLALLQGGDTILGMSLAHGGHLTHGASVSSSGKLYNAVQYGIDANGMIDYDEVERLAVEHKPKMIVAGFSAYSQILDFPRFRAIADKVGAYLFVDMAHVAGLVAAGVYPNPVPFADVVTTTTHKTLRGPRGGLILARANAEIEKKLNSAVFPGSQGGPLEHVIAAKAVCFKEALQPEFKTYQQQVVKNAKAMAGVFIERGFDVVSGGTENHLFLLSLIKQDISGKDADAALGRAFITVNKNSVPNDPRSPFVTSGLRFGTPAVTTRGFKEAECKELAGWICDILADLNNEAVIDAVREKVKAICAKLPVYGA.

(6S)-5,6,7,8-tetrahydrofolate is bound by residues Leu121 and 125-127 (GHL). Lys229 is subject to N6-(pyridoxal phosphate)lysine. 354 to 356 (SPF) lines the (6S)-5,6,7,8-tetrahydrofolate pocket.

The protein belongs to the SHMT family. As to quaternary structure, homodimer. Requires pyridoxal 5'-phosphate as cofactor.

It is found in the cytoplasm. The catalysed reaction is (6R)-5,10-methylene-5,6,7,8-tetrahydrofolate + glycine + H2O = (6S)-5,6,7,8-tetrahydrofolate + L-serine. The protein operates within one-carbon metabolism; tetrahydrofolate interconversion. It functions in the pathway amino-acid biosynthesis; glycine biosynthesis; glycine from L-serine: step 1/1. In terms of biological role, catalyzes the reversible interconversion of serine and glycine with tetrahydrofolate (THF) serving as the one-carbon carrier. This reaction serves as the major source of one-carbon groups required for the biosynthesis of purines, thymidylate, methionine, and other important biomolecules. Also exhibits THF-independent aldolase activity toward beta-hydroxyamino acids, producing glycine and aldehydes, via a retro-aldol mechanism. This Pseudomonas syringae pv. syringae (strain B728a) protein is Serine hydroxymethyltransferase 1.